Reading from the N-terminus, the 534-residue chain is uncharacterized protein (534 aa).

5 helical membrane-spanning segments follow: residues 4–22 (ILVL…RVSF), 24–46 (GISL…GWTI), 56–75 (ALFV…RGLA), 82–104 (AITG…RLLG), and 134–156 (PAAV…VLFV). Residues 167-187 (GDSDGTDSASETSGQSSAEIA) form a disordered region. Residues 172–187 (TDSASETSGQSSAEIA) are compositionally biased toward polar residues. RCK C-terminal domains lie at 180–264 (GQSS…TLGE) and 265–349 (LQDT…AVGH). The next 6 helical transmembrane spans lie at 359–378 (LLSL…LSLQ), 382–401 (FSMS…ILGH), 408–430 (IRGS…LFLA), 445–467 (MERG…LVGF), 479–501 (WQSL…LTGA), and 511–533 (YVAA…VELI).

This sequence belongs to the AAE transporter (TC 2.A.81) family.

It is found in the cell membrane. This is an uncharacterized protein from Rhodopirellula baltica (strain DSM 10527 / NCIMB 13988 / SH1).